The following is a 310-amino-acid chain: ADP-L-glycero-D-manno-heptose-6-epimerase (310 aa).

NADP(+) contacts are provided by residues F10–I11, D31–N32, K38, K53, E75–S79, and N92. Y140 acts as the Proton acceptor in catalysis. K144 is a binding site for NADP(+). A substrate-binding site is contributed by N169. Positions 170 and 178 each coordinate NADP(+). K178 serves as the catalytic Proton acceptor. Residues S180, H187, F201–S204, R209, and Y272 each bind substrate.

It belongs to the NAD(P)-dependent epimerase/dehydratase family. HldD subfamily. As to quaternary structure, homopentamer. It depends on NADP(+) as a cofactor.

The catalysed reaction is ADP-D-glycero-beta-D-manno-heptose = ADP-L-glycero-beta-D-manno-heptose. Its pathway is nucleotide-sugar biosynthesis; ADP-L-glycero-beta-D-manno-heptose biosynthesis; ADP-L-glycero-beta-D-manno-heptose from D-glycero-beta-D-manno-heptose 7-phosphate: step 4/4. Catalyzes the interconversion between ADP-D-glycero-beta-D-manno-heptose and ADP-L-glycero-beta-D-manno-heptose via an epimerization at carbon 6 of the heptose. This Klebsiella pneumoniae (strain 342) protein is ADP-L-glycero-D-manno-heptose-6-epimerase.